The following is a 374-amino-acid chain: 4-hydroxy-3-methylbut-2-en-1-yl diphosphate synthase (flavodoxin) (374 aa).

4 residues coordinate [4Fe-4S] cluster: Cys-270, Cys-273, Cys-305, and Glu-312.

This sequence belongs to the IspG family. [4Fe-4S] cluster is required as a cofactor.

It catalyses the reaction (2E)-4-hydroxy-3-methylbut-2-enyl diphosphate + oxidized [flavodoxin] + H2O + 2 H(+) = 2-C-methyl-D-erythritol 2,4-cyclic diphosphate + reduced [flavodoxin]. It functions in the pathway isoprenoid biosynthesis; isopentenyl diphosphate biosynthesis via DXP pathway; isopentenyl diphosphate from 1-deoxy-D-xylulose 5-phosphate: step 5/6. Converts 2C-methyl-D-erythritol 2,4-cyclodiphosphate (ME-2,4cPP) into 1-hydroxy-2-methyl-2-(E)-butenyl 4-diphosphate. This chain is 4-hydroxy-3-methylbut-2-en-1-yl diphosphate synthase (flavodoxin), found in Vibrio cholerae serotype O1 (strain ATCC 39315 / El Tor Inaba N16961).